The chain runs to 92 residues: ATP synthase subunit c (92 aa).

The next 2 helical transmembrane spans lie at 20-40 (GAGLVAVGAGLASIGNFGTGL) and 71-91 (MAISESASLYSFIIAILLVFV).

Belongs to the ATPase C chain family. As to quaternary structure, F-type ATPases have 2 components, F(1) - the catalytic core - and F(0) - the membrane proton channel. F(1) has five subunits: alpha(3), beta(3), gamma(1), delta(1), epsilon(1). F(0) has three main subunits: a(1), b(2) and c(10-14). The alpha and beta chains form an alternating ring which encloses part of the gamma chain. F(1) is attached to F(0) by a central stalk formed by the gamma and epsilon chains, while a peripheral stalk is formed by the delta and b chains.

It localises to the cell membrane. Its function is as follows. F(1)F(0) ATP synthase produces ATP from ADP in the presence of a proton or sodium gradient. F-type ATPases consist of two structural domains, F(1) containing the extramembraneous catalytic core and F(0) containing the membrane proton channel, linked together by a central stalk and a peripheral stalk. During catalysis, ATP synthesis in the catalytic domain of F(1) is coupled via a rotary mechanism of the central stalk subunits to proton translocation. Functionally, key component of the F(0) channel; it plays a direct role in translocation across the membrane. A homomeric c-ring of between 10-14 subunits forms the central stalk rotor element with the F(1) delta and epsilon subunits. In Mycoplasmopsis pulmonis (strain UAB CTIP) (Mycoplasma pulmonis), this protein is ATP synthase subunit c.